Reading from the N-terminus, the 212-residue chain is 3-isopropylmalate dehydratase small subunit (212 aa).

This sequence belongs to the LeuD family. LeuD type 1 subfamily. As to quaternary structure, heterodimer of LeuC and LeuD.

It catalyses the reaction (2R,3S)-3-isopropylmalate = (2S)-2-isopropylmalate. It functions in the pathway amino-acid biosynthesis; L-leucine biosynthesis; L-leucine from 3-methyl-2-oxobutanoate: step 2/4. Catalyzes the isomerization between 2-isopropylmalate and 3-isopropylmalate, via the formation of 2-isopropylmaleate. The protein is 3-isopropylmalate dehydratase small subunit of Pseudomonas aeruginosa (strain UCBPP-PA14).